A 412-amino-acid polypeptide reads, in one-letter code: Multifunctional CCA protein (412 aa).

Residues glycine 8 and arginine 11 each contribute to the ATP site. 2 residues coordinate CTP: glycine 8 and arginine 11. Positions 21 and 23 each coordinate Mg(2+). Arginine 91, arginine 137, and arginine 140 together coordinate ATP. Positions 91, 137, and 140 each coordinate CTP. The HD domain occupies 228–329 (CGIHTLMSLQ…WRLLQRLDVL (102 aa)).

Belongs to the tRNA nucleotidyltransferase/poly(A) polymerase family. Bacterial CCA-adding enzyme type 1 subfamily. Monomer. Can also form homodimers and oligomers. It depends on Mg(2+) as a cofactor. Ni(2+) serves as cofactor.

The catalysed reaction is a tRNA precursor + 2 CTP + ATP = a tRNA with a 3' CCA end + 3 diphosphate. The enzyme catalyses a tRNA with a 3' CCA end + 2 CTP + ATP = a tRNA with a 3' CCACCA end + 3 diphosphate. Catalyzes the addition and repair of the essential 3'-terminal CCA sequence in tRNAs without using a nucleic acid template. Adds these three nucleotides in the order of C, C, and A to the tRNA nucleotide-73, using CTP and ATP as substrates and producing inorganic pyrophosphate. tRNA 3'-terminal CCA addition is required both for tRNA processing and repair. Also involved in tRNA surveillance by mediating tandem CCA addition to generate a CCACCA at the 3' terminus of unstable tRNAs. While stable tRNAs receive only 3'-terminal CCA, unstable tRNAs are marked with CCACCA and rapidly degraded. In Acinetobacter baumannii (strain AB307-0294), this protein is Multifunctional CCA protein.